We begin with the raw amino-acid sequence, 33 residues long: Photosystem II reaction center protein Psb30 (33 aa).

A helical membrane pass occupies residues 8-28; the sequence is QLGSLLLITVAGPLIVFFLFI.

Belongs to the Psb30/Ycf12 family. In terms of assembly, PSII is composed of 1 copy each of membrane proteins PsbA, PsbB, PsbC, PsbD, PsbE, PsbF, PsbH, PsbI, PsbJ, PsbK, PsbL, PsbM, PsbT, PsbY, PsbZ, Psb30/Ycf12, peripheral proteins of the oxygen-evolving complex and a large number of cofactors. It forms dimeric complexes.

The protein localises to the plastid. It localises to the chloroplast thylakoid membrane. In terms of biological role, a core subunit of photosystem II (PSII), probably helps stabilize the reaction center. The sequence is that of Photosystem II reaction center protein Psb30 from Euglena anabaena (Euglenaria anabaena).